A 330-amino-acid polypeptide reads, in one-letter code: Aspartate--ammonia ligase (330 aa).

Belongs to the class-II aminoacyl-tRNA synthetase family. AsnA subfamily.

Its subcellular location is the cytoplasm. The catalysed reaction is L-aspartate + NH4(+) + ATP = L-asparagine + AMP + diphosphate + H(+). Its pathway is amino-acid biosynthesis; L-asparagine biosynthesis; L-asparagine from L-aspartate (ammonia route): step 1/1. The polypeptide is Aspartate--ammonia ligase (Haemophilus influenzae (strain PittGG)).